The primary structure comprises 260 residues: Thiazole synthase (260 aa).

Catalysis depends on Lys96, which acts as the Schiff-base intermediate with DXP. Residues Gly157, 184-185 (AG), and 206-207 (NT) contribute to the 1-deoxy-D-xylulose 5-phosphate site.

This sequence belongs to the ThiG family. Homotetramer. Forms heterodimers with either ThiH or ThiS.

It localises to the cytoplasm. It catalyses the reaction [ThiS sulfur-carrier protein]-C-terminal-Gly-aminoethanethioate + 2-iminoacetate + 1-deoxy-D-xylulose 5-phosphate = [ThiS sulfur-carrier protein]-C-terminal Gly-Gly + 2-[(2R,5Z)-2-carboxy-4-methylthiazol-5(2H)-ylidene]ethyl phosphate + 2 H2O + H(+). Its pathway is cofactor biosynthesis; thiamine diphosphate biosynthesis. In terms of biological role, catalyzes the rearrangement of 1-deoxy-D-xylulose 5-phosphate (DXP) to produce the thiazole phosphate moiety of thiamine. Sulfur is provided by the thiocarboxylate moiety of the carrier protein ThiS. In vitro, sulfur can be provided by H(2)S. This chain is Thiazole synthase, found in Rhodopseudomonas palustris (strain ATCC BAA-98 / CGA009).